Consider the following 199-residue polypeptide: Ion-translocating oxidoreductase complex subunit A (199 aa).

The next 6 membrane-spanning stretches (helical) occupy residues 8–28 (LFTI…QFLG), 49–69 (VVFV…FILV), 75–95 (FLRT…VEFI), 106–126 (SLGI…AVLL), 138–158 (VVFG…MAAI), and 178–198 (AFFI…VIPL).

It belongs to the NqrDE/RnfAE family. As to quaternary structure, the Rnf complex is probably composed of eight subunits, including RnfA, RnfB, RnfC, RnfD, RnfE and RnfG.

The protein localises to the cell membrane. In terms of biological role, part of a membrane-bound complex that couples electron transfer with translocation of ions across the membrane. Catalyzes Na(+) transport, most probably coupled to electron transfer from reduced ferredoxin to methanophenazine and heterodisulfide reductase. Involved in heterodisulfide reduction during methanogenesis from acetate. This chain is Ion-translocating oxidoreductase complex subunit A, found in Methanosarcina acetivorans (strain ATCC 35395 / DSM 2834 / JCM 12185 / C2A).